The chain runs to 160 residues: Endoribonuclease YbeY (160 aa).

Residues His-125, His-129, and His-135 each coordinate Zn(2+).

Belongs to the endoribonuclease YbeY family. The cofactor is Zn(2+).

It localises to the cytoplasm. Its function is as follows. Single strand-specific metallo-endoribonuclease involved in late-stage 70S ribosome quality control and in maturation of the 3' terminus of the 16S rRNA. This is Endoribonuclease YbeY from Dehalococcoides mccartyi (strain ATCC BAA-2100 / JCM 16839 / KCTC 5957 / BAV1).